The following is a 709-amino-acid chain: FACT complex subunit SSRP1 (709 aa).

Ala-2 bears the N-acetylalanine mark. Lys-90 is covalently cross-linked (Glycyl lysine isopeptide (Lys-Gly) (interchain with G-Cter in SUMO2)). Thr-170 carries the post-translational modification Phosphothreonine. Position 233 is an N6-acetyllysine (Lys-233). Residues Lys-296 and Lys-364 each participate in a glycyl lysine isopeptide (Lys-Gly) (interchain with G-Cter in SUMO2) cross-link. Lys-413 carries the post-translational modification N6-acetyllysine. Ser-437 is subject to Phosphoserine. Tyr-441 is modified (phosphotyrosine). Ser-444 bears the Phosphoserine mark. A Phosphotyrosine modification is found at Tyr-452. The interval 458-709 (EEGKIREENA…SEDSASGSDE (252 aa)) is disordered. The segment covering 470–496 (SSDDSGEETDESFNPGEEEEDVAEEFD) has biased composition (acidic residues). Ser-471 is subject to Phosphoserine. Residues 497 to 507 (SNASASSSSNE) show a composition bias toward low complexity. At Ser-510 the chain carries Phosphoserine; by CK2. The segment covering 515–533 (KKRKQLKKAKMAKDRKSRK) has biased composition (basic residues). 2 stretches are compositionally biased toward basic and acidic residues: residues 534–546 (KPVE…DPNA) and 577–624 (LSKK…SSKR). Residue Lys-542 is modified to N6-acetyllysine. The segment at residues 547–615 (PKRPMSAYML…DYEKAMKEYE (69 aa)) is a DNA-binding region (HMG box). Positions 625–634 (DKSKKKKKVK) are enriched in basic residues. The segment covering 643–659 (PSRGSSSKSSSRQLSES) has biased composition (low complexity). Phosphoserine occurs at positions 657, 659, 667, 668, 671, 672, and 673. Ser-688 carries the post-translational modification Phosphoserine; by CK2. The segment covering 696–709 (TPPSSEDSASGSDE) has biased composition (polar residues).

This sequence belongs to the SSRP1 family. As to quaternary structure, interacts with MYOG (via C-terminal region). Component of the FACT complex, a stable heterodimer of SSRP1 and SUPT16H. Also a component of a CK2-SPT16-SSRP1 complex which forms following UV irradiation, composed of SSRP1, SUPT16H, CSNK2A1, CSNK2A2 and CSNK2B. Binds to histone H3-H4 tetramers, but not to intact nucleosomes. Identified in a centromere complex containing histones H2A, H2B and H4, and at least CENPA, CENPB, CENPC, CENPT, CENPN, HJURP, SUPT16H, SSRP1 and RSF1. Interacts with isoform gamma of TP63. Interacts with FYTTD1/UIF. Interacts with SRF. Interacts with NEK9. (Microbial infection) Interacts with Herpes simplex virus 1 (HHV-1) protein ICP22; this interaction relocalizes the FACT complex to viral genomes in infected cells. In terms of processing, phosphorylated by CK2 following UV but not gamma irradiation. Phosphorylation inhibits its DNA-binding activity. Ubiquitinated. Polyubiquitinated following caspase cleavage resulting in degradation of the N-terminal ubiquitinated part of the cleaved protein. Post-translationally, sumoylated.

It is found in the nucleus. The protein localises to the nucleolus. It localises to the chromosome. Component of the FACT complex, a general chromatin factor that acts to reorganize nucleosomes. The FACT complex is involved in multiple processes that require DNA as a template such as mRNA elongation, DNA replication and DNA repair. During transcription elongation the FACT complex acts as a histone chaperone that both destabilizes and restores nucleosomal structure. It facilitates the passage of RNA polymerase II and transcription by promoting the dissociation of one histone H2A-H2B dimer from the nucleosome, then subsequently promotes the reestablishment of the nucleosome following the passage of RNA polymerase II. The FACT complex is probably also involved in phosphorylation of 'Ser-392' of p53/TP53 via its association with CK2 (casein kinase II). Binds specifically to double-stranded DNA and at low levels to DNA modified by the antitumor agent cisplatin. May potentiate cisplatin-induced cell death by blocking replication and repair of modified DNA. Also acts as a transcriptional coactivator for p63/TP63. The polypeptide is FACT complex subunit SSRP1 (SSRP1) (Homo sapiens (Human)).